Consider the following 436-residue polypeptide: F-box/LRR-repeat protein 20 (436 aa).

An F-box domain is found at Ala22–Ile68. 13 LRR repeats span residues Gln74–Gly100, Cys101–Gly126, Cys127–Ser152, Cys153–Trp178, Cys179–Gly204, Cys205–Thr230, Cys231–Gly256, Cys257–Arg282, Cys283–Glu308, Cys309–His334, Cys335–Asn363, Cys364–Asp388, and Cys389–Ala414. Thr417 is modified (phosphothreonine). The residue at position 421 (Ser421) is a Phosphoserine.

As to quaternary structure, interacts with SKP1 and CUL1. As to expression, highly expressed in brain.

It is found in the cytoplasm. Substrate-recognition component of the SCF (SKP1-CUL1-F-box protein)-type E3 ubiquitin ligase complex. Isoform 3 regulates neural transmission by binding and ubiquitinating RIMS1, a modulator of presynaptic plasticity. The protein is F-box/LRR-repeat protein 20 (Fbxl20) of Mus musculus (Mouse).